A 230-amino-acid polypeptide reads, in one-letter code: SPbeta prophage-derived putative HNH endonuclease YoqL (230 aa).

In terms of domain architecture, HNH spans 136–188; the sequence is CSYCGLKIEDHKILFKGTYIQSDFHKEHVDHKGANDISNCIPACKSCNSSKHD.

It belongs to the HNH nuclease family.

In Bacillus subtilis (strain 168), this protein is SPbeta prophage-derived putative HNH endonuclease YoqL (yoqL).